The primary structure comprises 209 residues: Uracil phosphoribosyltransferase (209 aa).

Residues arginine 79, arginine 104, and 131-139 (DPMLATGGS) contribute to the 5-phospho-alpha-D-ribose 1-diphosphate site. Residues isoleucine 194 and 199 to 201 (GDA) contribute to the uracil site. A 5-phospho-alpha-D-ribose 1-diphosphate-binding site is contributed by aspartate 200.

Belongs to the UPRTase family. Mg(2+) is required as a cofactor.

The catalysed reaction is UMP + diphosphate = 5-phospho-alpha-D-ribose 1-diphosphate + uracil. It participates in pyrimidine metabolism; UMP biosynthesis via salvage pathway; UMP from uracil: step 1/1. Its activity is regulated as follows. Allosterically activated by GTP. Its function is as follows. Catalyzes the conversion of uracil and 5-phospho-alpha-D-ribose 1-diphosphate (PRPP) to UMP and diphosphate. This Exiguobacterium sp. (strain ATCC BAA-1283 / AT1b) protein is Uracil phosphoribosyltransferase.